A 372-amino-acid polypeptide reads, in one-letter code: MTALNHTPLNAAHRALNARMVDFGGWDMPVNYGSQIEEHAAVRTDAGMFDVSHMCVVDFTGSRVRAFFEHAIANNVGKLKTPGKALYSCLLNPQGGVIDDLIVYYFTEEFFRVVVNAGTADKDIAWFNQLNEQGGYGLTIAPRRDFAIVAVQGPNAREKVWATVPSARAATSELKPFNAAQVAGTPFGDLTIARTGYTGEDGFEVIVPAVHVEVLWNALQQHGVRPCGLGARDTLRLEAGMNLYGQDMDDTVSPLDAGLAWTVDLAAPRDFVGRAALEANGTRAAFVGLILQKENGKAGGVLRAHQKVVTPHGEGEITSGTFSPSMQESIAFARVPAAVQIGDTVQVQIRDKNLPARVVKLPFVRNGKVLAA.

The protein belongs to the GcvT family. As to quaternary structure, the glycine cleavage system is composed of four proteins: P, T, L and H.

The catalysed reaction is N(6)-[(R)-S(8)-aminomethyldihydrolipoyl]-L-lysyl-[protein] + (6S)-5,6,7,8-tetrahydrofolate = N(6)-[(R)-dihydrolipoyl]-L-lysyl-[protein] + (6R)-5,10-methylene-5,6,7,8-tetrahydrofolate + NH4(+). Its function is as follows. The glycine cleavage system catalyzes the degradation of glycine. This Burkholderia cenocepacia (strain ATCC BAA-245 / DSM 16553 / LMG 16656 / NCTC 13227 / J2315 / CF5610) (Burkholderia cepacia (strain J2315)) protein is Aminomethyltransferase.